The following is a 288-amino-acid chain: Syntaxin-1B (288 aa).

Residues 1 to 13 show a composition bias toward basic and acidic residues; sequence MKDRTQELRSAKD. Residues 1 to 20 are disordered; sequence MKDRTQELRSAKDSDDEEEV. At 1–264 the chain is on the cytoplasmic side; that stretch reads MKDRTQELRS…KYQSKARRKK (264 aa). Residues Ser-10 and Ser-14 each carry the phosphoserine modification. A coiled-coil region spans residues 29–104; sequence MDEFFEQVEE…IEQSIEQEEG (76 aa). Residues 191-253 enclose the t-SNARE coiled-coil homology domain; the sequence is LNEIETRHNE…ERAVSDTKKA (63 aa). A helical; Anchor for type IV membrane protein membrane pass occupies residues 265-288; sequence IMIIICCVVLGVVLASSIGGTLGL.

This sequence belongs to the syntaxin family. In terms of assembly, interacts with OTOF. Interacts with SYT6 and SYT8; the interaction is Ca(2+)-dependent. Post-translationally, phosphorylated by CK2.

It localises to the membrane. Its subcellular location is the nucleus. It is found in the cytoplasm. The protein localises to the cytoskeleton. The protein resides in the microtubule organizing center. It localises to the centrosome. Its subcellular location is the spindle. Functionally, potentially involved in docking of synaptic vesicles at presynaptic active zones. May mediate Ca(2+)-regulation of exocytosis acrosomal reaction in sperm. This Homo sapiens (Human) protein is Syntaxin-1B (STX1B).